Reading from the N-terminus, the 252-residue chain is Secreted LysM effector LysM1 (252 aa).

The LysM 1 domain occupies 20–64 (FAIPGDPGDTCDTLSDRWGITIDIFKSLNPGVNCPNLVANMEYCV). The interval 71–98 (DTPSTTTTAKPTMTPTSTPTKTTTTSTA) is disordered. Residues 72–98 (TPSTTTTAKPTMTPTSTPTKTTTTSTA) show a composition bias toward low complexity. LysM domains are found at residues 126–172 (KFHL…YVCV) and 204–250 (KFHL…YVCI).

Belongs to the secreted LysM effector family.

The protein resides in the secreted. The protein localises to the cell wall. Its function is as follows. Secreted effector that binds two substrates, chitin and N-linked oligosaccharides associated with human skin glycoproteins. Could provide the pathogen with three important functions including shielding host cell wall chitin from the human immune system, shielding the pathogen's glycoproteins from host degradation and immune surveillance, and helping facilitate pathogen adhesion to human skin. This Trichophyton rubrum (strain ATCC MYA-4607 / CBS 118892) (Athlete's foot fungus) protein is Secreted LysM effector LysM1.